The following is a 115-amino-acid chain: U3-lycotoxin-Ls1n (115 aa).

Residues 1 to 20 (MKFVLLFGVLLVTLFSYSSA) form the signal peptide. Positions 21–44 (EMLDDFDQADEDELLSLIEKEEAR) are excised as a propeptide. Disulfide bonds link C48/C63, C55/C72, C62/C87, and C74/C85.

This sequence belongs to the neurotoxin 19 (CSTX) family. 01 subfamily. Expressed by the venom gland.

The protein localises to the secreted. This chain is U3-lycotoxin-Ls1n, found in Lycosa singoriensis (Wolf spider).